The sequence spans 256 residues: Myeloblastin (256 aa).

Residues 1–25 (MAHRPPSPALASVLLALLLSGAARA) form the signal peptide. A propeptide spanning residues 26-27 (AE) is cleaved from the precursor. Residues 28-248 (IVGGHEAQPH…YVDWIRSTLR (221 aa)) form the Peptidase S1 domain. A disulfide bond links C56 and C72. Active-site charge relay system residues include H71 and D118. Residues N129 and N174 are each glycosylated (N-linked (GlcNAc...) asparagine). Cystine bridges form between C152–C209, C182–C188, and C199–C224. S203 functions as the Charge relay system in the catalytic mechanism. Positions 249-256 (RVEAKGRP) are excised as a propeptide.

The protein belongs to the peptidase S1 family. Elastase subfamily. As to quaternary structure, may form dimers. Interacts with CD177; the interaction tethers PRTN3 to the cell surface; the interaction is direct. Interacts with SERPINB1. Interacts with ADGRG3. Expressed in polymorphonuclear leukocytes (at protein level). Expressed in neutrophils (at protein level). Expressed in differentiating neutrophils.

The protein resides in the cytoplasmic granule. The protein localises to the secreted. Its subcellular location is the cell membrane. It localises to the membrane raft. It carries out the reaction Hydrolysis of proteins, including elastin, by preferential cleavage: -Ala-|-Xaa- &gt; -Val-|-Xaa-.. Inhibited by phenylmethanesulfonyl fluoride (PMSF) and diisopropyl fluorophosphate (DFP). Serine protease that degrades elastin, fibronectin, laminin, vitronectin, and collagen types I, III, and IV (in vitro). By cleaving and activating receptor F2RL1/PAR-2, enhances endothelial cell barrier function and thus vascular integrity during neutrophil transendothelial migration. Plays a role in neutrophil transendothelial migration, probably when associated with CD177. Triggers inflammatory processes in neutrophils by interacting with ADGRG3 upstream of F2RL1/PAR2 activation. The polypeptide is Myeloblastin (PRTN3) (Homo sapiens (Human)).